The following is a 72-amino-acid chain: DNA-directed RNA polymerase subunit omega (72 aa).

The protein belongs to the RNA polymerase subunit omega family. As to quaternary structure, the RNAP catalytic core consists of 2 alpha, 1 beta, 1 beta' and 1 omega subunit. When a sigma factor is associated with the core the holoenzyme is formed, which can initiate transcription.

It carries out the reaction RNA(n) + a ribonucleoside 5'-triphosphate = RNA(n+1) + diphosphate. Functionally, promotes RNA polymerase assembly. Latches the N- and C-terminal regions of the beta' subunit thereby facilitating its interaction with the beta and alpha subunits. In Laribacter hongkongensis (strain HLHK9), this protein is DNA-directed RNA polymerase subunit omega.